The following is a 514-amino-acid chain: ATP synthase subunit alpha (514 aa).

Residue glycine 170–threonine 177 coordinates ATP.

This sequence belongs to the ATPase alpha/beta chains family. In terms of assembly, F-type ATPases have 2 components, CF(1) - the catalytic core - and CF(0) - the membrane proton channel. CF(1) has five subunits: alpha(3), beta(3), gamma(1), delta(1), epsilon(1). CF(0) has three main subunits: a(1), b(2) and c(9-12). The alpha and beta chains form an alternating ring which encloses part of the gamma chain. CF(1) is attached to CF(0) by a central stalk formed by the gamma and epsilon chains, while a peripheral stalk is formed by the delta and b chains.

It localises to the cell inner membrane. It catalyses the reaction ATP + H2O + 4 H(+)(in) = ADP + phosphate + 5 H(+)(out). Produces ATP from ADP in the presence of a proton gradient across the membrane. The alpha chain is a regulatory subunit. The chain is ATP synthase subunit alpha from Psychrobacter cryohalolentis (strain ATCC BAA-1226 / DSM 17306 / VKM B-2378 / K5).